Here is a 396-residue protein sequence, read N- to C-terminus: MSKEKFVRNKPHCNIGTIGHVDHGKTTLTAAITITLAELGGGKAVAYDQIDKAPEEKERGITISTAHVEYETEKRHYAHVDCPGHADYVKNMITGAAQMDGAILVVNAADGPMPQTREHILLGRQVGIPAIVVYLNKVDQVDDKDMIELVEEEIRELLTSYKYPGDKTPIVKGSALAAVEGRDEEIGKNSIIELMKAVDEFIPQPTRDIDKPFLMPVEDVFSISGRGTVATGRIESGVIKTGEEVEIVGVTATKKSVCTGVEMFRKLLDSGEAGDNVGILLRGVERDDIQRGQVLCKPASITPHTKFEAQAYVLKKDEGGRHTPFFTKYRPQFYFRTTDVTGEVTLPAGTEMVMPGDDAKFTVTLITPIAMSEKLNFAIREGGRTVGAGVVTKIIE.

One can recognise a tr-type G domain in the interval 10–206 (KPHCNIGTIG…AVDEFIPQPT (197 aa)). The interval 19–26 (GHVDHGKT) is G1. Residue 19–26 (GHVDHGKT) coordinates GTP. T26 contributes to the Mg(2+) binding site. Residues 60 to 64 (GITIS) form a G2 region. The segment at 81–84 (DCPG) is G3. GTP-binding positions include 81 to 85 (DCPGH) and 136 to 139 (NKVD). Residues 136-139 (NKVD) are G4. The tract at residues 174-176 (SAL) is G5.

This sequence belongs to the TRAFAC class translation factor GTPase superfamily. Classic translation factor GTPase family. EF-Tu/EF-1A subfamily. Monomer.

Its subcellular location is the cytoplasm. The enzyme catalyses GTP + H2O = GDP + phosphate + H(+). Its function is as follows. GTP hydrolase that promotes the GTP-dependent binding of aminoacyl-tRNA to the A-site of ribosomes during protein biosynthesis. In Pelagibacter ubique (strain HTCC1062), this protein is Elongation factor Tu.